The sequence spans 192 residues: UPF0301 protein Bphyt_0868 (192 aa).

The protein belongs to the UPF0301 (AlgH) family.

This chain is UPF0301 protein Bphyt_0868, found in Paraburkholderia phytofirmans (strain DSM 17436 / LMG 22146 / PsJN) (Burkholderia phytofirmans).